The chain runs to 668 residues: Patellin-5 (668 aa).

The segment at 1–263 is disordered; it reads MSQDSATTTP…STTTSTVASR (263 aa). 4 stretches are compositionally biased toward basic and acidic residues: residues 55–68, 82–100, 107–125, and 132–150; these read ESNH…EKVT, AAED…ETAK, TAED…ETVK, and VAED…ETVK. Residues 170-186 are compositionally biased toward polar residues; sequence TPETETSEADTSLLVTS. A compositionally biased stretch (acidic residues) spans 218–231; it reads VEDWTEPELPDEAV. Pro residues predominate over residues 244 to 254; it reads PEPQTPPPPPS. The residue at position 290 (Ser290) is a Phosphoserine. Residues 377 to 552 form the CRAL-TRIO domain; sequence DENLGDDLDK…QYGGLSVDNC (176 aa). Residues 556-662 enclose the GOLD domain; the sequence is SDFTHDDIAT…KKMLIYRFKV (107 aa).

Belongs to the patellin family.

Its subcellular location is the membrane. It is found in the cytoplasm. In terms of biological role, carrier protein that may be involved in membrane-trafficking events associated with cell plate formation during cytokinesis. Binds to some hydrophobic molecules such as phosphoinositides and promotes their transfer between the different cellular sites. This Arabidopsis thaliana (Mouse-ear cress) protein is Patellin-5 (PATL5).